Here is a 285-residue protein sequence, read N- to C-terminus: Probable endonuclease 4 (285 aa).

The Zn(2+) site is built by His-68, His-108, Glu-145, Asp-179, His-182, His-216, Asp-229, His-231, and Glu-261.

Belongs to the AP endonuclease 2 family. Zn(2+) serves as cofactor.

It catalyses the reaction Endonucleolytic cleavage to 5'-phosphooligonucleotide end-products.. Functionally, endonuclease IV plays a role in DNA repair. It cleaves phosphodiester bonds at apurinic or apyrimidinic (AP) sites, generating a 3'-hydroxyl group and a 5'-terminal sugar phosphate. The protein is Probable endonuclease 4 of Geotalea daltonii (strain DSM 22248 / JCM 15807 / FRC-32) (Geobacter daltonii).